A 1002-amino-acid polypeptide reads, in one-letter code: Calcium-transporting ATPase sarcoplasmic/endoplasmic reticulum type (1002 aa).

At 1–48 (MEDGHSKTVEQSLNFFGTDGERGLTLDQIKTNQAKYGPNELPTEEGKS) the chain is on the cytoplasmic side. The helical transmembrane segment at 49–69 (IWQLVLEQFDDLLVKILLLAA) threads the bilayer. Over 70 to 89 (IISFVLALFEEHEETFTAFV) the chain is Lumenal. Residues 90–110 (EPLVILLILIANAVVGVWQER) form a helical membrane-spanning segment. Residues 111-253 (NAESAIEALK…EIKTPLQQKL (143 aa)) are Cytoplasmic-facing. A helical membrane pass occupies residues 254-273 (DEFGEQLSKVISVICVAVWA). Topologically, residues 274-295 (INIGHFNDPAHGGSWIKGAIYY) are lumenal. A helical membrane pass occupies residues 296–313 (FKIAVALAVAAIPEGLPA). Ca(2+) contacts are provided by Val304, Ala305, Ile307, and Glu309. The Cytoplasmic segment spans residues 314–757 (VITTCLALGT…EEGRAIYNNM (444 aa)). Catalysis depends on Asp351, which acts as the 4-aspartylphosphate intermediate. Asp703 and Asp707 together coordinate Mg(2+). A helical transmembrane segment spans residues 758 to 777 (KQFIRYLISSNIGEVVSIFL). Ca(2+)-binding residues include Asn768 and Glu771. Topologically, residues 778–787 (TAALGLPEAL) are lumenal. The helical transmembrane segment at 788-808 (IPVQLLWVNLVTDGLPATALG) threads the bilayer. Positions 796, 799, and 800 each coordinate Ca(2+). The Cytoplasmic segment spans residues 809 to 828 (FNPPDLDIMDKPPRKADEGL). Residues 829 to 851 (ISGWLFFRYMAIGFYVGAATVGA) form a helical membrane-spanning segment. At 852 to 897 (AAWWFIASSEGPGLTYWQLTHHLSCLGGGDEFKGVDCKIFSDPKAM) the chain is on the lumenal side. Residues 898-917 (TMALSVLVTIEMLNAMNSLS) traverse the membrane as a helical segment. A Ca(2+)-binding site is contributed by Glu908. Over 918-930 (ENQSLISMPPWCN) the chain is Cytoplasmic. A helical membrane pass occupies residues 931–949 (LWLIGSMALSFTLHFVILY). Residues 950–964 (VDVLSTVFQVTPLSA) are Lumenal-facing. The chain crosses the membrane as a helical span at residues 965–985 (EEWITVMKFSIPVVLLDETLK). The Cytoplasmic segment spans residues 986–1002 (FVARKIADVPDAVVDKW).

Belongs to the cation transport ATPase (P-type) (TC 3.A.3) family.

The protein localises to the endoplasmic reticulum membrane. The protein resides in the sarcoplasmic reticulum membrane. The catalysed reaction is Ca(2+)(in) + ATP + H2O = Ca(2+)(out) + ADP + phosphate + H(+). Its function is as follows. This magnesium-dependent enzyme catalyzes the hydrolysis of ATP coupled with the transport of calcium. The protein is Calcium-transporting ATPase sarcoplasmic/endoplasmic reticulum type of Drosophila pseudoobscura pseudoobscura (Fruit fly).